The sequence spans 397 residues: Protein Brevis radix-like 1 (397 aa).

2 disordered regions span residues 14 to 37 (GAPP…AGEC) and 105 to 148 (RAGS…EDDE). Acidic residues predominate over residues 124–148 (AGDEEEEEEEEEEEGTTADGSEDDE). A BRX 1 domain is found at 150 to 205 (KEWVAQVEPGVLITFLSLPEGGNDLKRIRFSREIFNKWQAQRWWAENYEKVMELYN). Disordered regions lie at residues 212 to 278 (QTPL…QQHH) and 300 to 342 (SISG…DQER). Residues 220–230 (KSEDESLKEDI) show a composition bias toward basic and acidic residues. The span at 309–320 (SSMDASMRSSSS) shows a compositional bias: low complexity. Positions 342–397 (REWVEEDEPGVYITIRALPGGIRELRRVRFSREKFSEMHARLWWEENRARIHDQYL) constitute a BRX 2 domain.

Belongs to the BRX family.

It localises to the nucleus. In Oryza sativa subsp. japonica (Rice), this protein is Protein Brevis radix-like 1 (BRXL1).